A 637-amino-acid polypeptide reads, in one-letter code: Biosynthetic arginine decarboxylase (637 aa).

Lys-101 is modified (N6-(pyridoxal phosphate)lysine). A substrate-binding site is contributed by 286-296; the sequence is FDVGGGLAVDY.

It belongs to the Orn/Lys/Arg decarboxylase class-II family. SpeA subfamily. Mg(2+) serves as cofactor. Requires pyridoxal 5'-phosphate as cofactor.

It catalyses the reaction L-arginine + H(+) = agmatine + CO2. The protein operates within amine and polyamine biosynthesis; agmatine biosynthesis; agmatine from L-arginine: step 1/1. Its function is as follows. Catalyzes the biosynthesis of agmatine from arginine. The protein is Biosynthetic arginine decarboxylase of Shewanella baltica (strain OS195).